We begin with the raw amino-acid sequence, 654 residues long: Peptide-N(4)-(N-acetyl-beta-glucosaminyl)asparagine amidase (654 aa).

Ala-2 carries the post-translational modification N-acetylalanine. One can recognise a PUB domain in the interval 30-91; the sequence is EASKLLLTYA…EGETHLIFPK (62 aa). Positions 112–123 are enriched in basic and acidic residues; that stretch reads RLDGSNKSHKVE. The interval 112 to 167 is disordered; the sequence is RLDGSNKSHKVESSQQPAASTQLPTTPSSNPSGLNQHTRNRQGQSPDPPSASTVTP. Residues 124–167 are compositionally biased toward polar residues; it reads SSQQPAASTQLPTTPSSNPSGLNQHTRNRQGQSPDPPSASTVTP. Thr-137 bears the Phosphothreonine mark. 4 residues coordinate Zn(2+): Cys-250, Cys-253, Cys-283, and Cys-286. The active-site Nucleophile is Cys-309. Active-site residues include His-336 and Asp-353. The region spanning 454–654 is the PAW domain; sequence ELGGRISGSV…LEIIIKFSDL (201 aa).

This sequence belongs to the transglutaminase-like superfamily. PNGase family. In terms of assembly, component of a complex required to couple retrotranslocation, ubiquitination and deglycosylation composed of NGLY1, SAKS1, AMFR, VCP and RAD23B. Interacts with the proteasome components RAD23B and PSMC1. Interacts with directly with VCP. Interacts with DERL1, bringing it close to the endoplasmic reticulum membrane. Interacts with SAKS1. Requires Zn(2+) as cofactor.

The protein localises to the cytoplasm. It catalyses the reaction Hydrolysis of an N(4)-(acetyl-beta-D-glucosaminyl)asparagine residue in which the glucosamine residue may be further glycosylated, to yield a (substituted) N-acetyl-beta-D-glucosaminylamine and a peptide containing an aspartate residue.. Its activity is regulated as follows. Inhibited by Z-VAD-fmk, a well-known caspase inhibitor, which inhibits enzyme activity through covalent binding of the carbohydrate to the single Cys-306 residue. Its function is as follows. Specifically deglycosylates the denatured form of N-linked glycoproteins in the cytoplasm and assists their proteasome-mediated degradation. Cleaves the beta-aspartyl-glucosamine (GlcNAc) of the glycan and the amide side chain of Asn, converting Asn to Asp. Prefers proteins containing high-mannose over those bearing complex type oligosaccharides. Can recognize misfolded proteins in the endoplasmic reticulum that are exported to the cytosol to be destroyed and deglycosylate them, while it has no activity toward native proteins. Deglycosylation is a prerequisite for subsequent proteasome-mediated degradation of some, but not all, misfolded glycoproteins. The chain is Peptide-N(4)-(N-acetyl-beta-glucosaminyl)asparagine amidase (NGLY1) from Macaca fascicularis (Crab-eating macaque).